Reading from the N-terminus, the 115-residue chain is Holo-[acyl-carrier-protein] synthase (115 aa).

The Mg(2+) site is built by Asp8 and Glu50.

This sequence belongs to the P-Pant transferase superfamily. AcpS family. The cofactor is Mg(2+).

The protein localises to the cytoplasm. It carries out the reaction apo-[ACP] + CoA = holo-[ACP] + adenosine 3',5'-bisphosphate + H(+). Functionally, transfers the 4'-phosphopantetheine moiety from coenzyme A to a Ser of acyl-carrier-protein. The polypeptide is Holo-[acyl-carrier-protein] synthase (Renibacterium salmoninarum (strain ATCC 33209 / DSM 20767 / JCM 11484 / NBRC 15589 / NCIMB 2235)).